Here is a 513-residue protein sequence, read N- to C-terminus: uncharacterized protein (513 aa).

The HDOD domain maps to 254–447 (IPQLPSKLLE…INTIRFHHNL (194 aa)).

This is an uncharacterized protein from Treponema pallidum (strain Nichols).